A 273-amino-acid chain; its full sequence is Soluble P-type ATPase-like phosphatase (273 aa).

Aspartate 8 functions as the 4-aspartylphosphate intermediate in the catalytic mechanism.

It belongs to the cation transport ATPase (P-type) (TC 3.A.3) family. Type IB subfamily. It depends on Mg(2+) as a cofactor.

Its activity is regulated as follows. Inhibited by orthovanadate. Functionally, most probably acts as a phosphatase in the cytosol. The polypeptide is Soluble P-type ATPase-like phosphatase (patS) (Methanocaldococcus jannaschii (strain ATCC 43067 / DSM 2661 / JAL-1 / JCM 10045 / NBRC 100440) (Methanococcus jannaschii)).